We begin with the raw amino-acid sequence, 476 residues long: Aspartyl/glutamyl-tRNA(Asn/Gln) amidotransferase subunit B (476 aa).

The protein belongs to the GatB/GatE family. GatB subfamily. In terms of assembly, heterotrimer of A, B and C subunits.

The catalysed reaction is L-glutamyl-tRNA(Gln) + L-glutamine + ATP + H2O = L-glutaminyl-tRNA(Gln) + L-glutamate + ADP + phosphate + H(+). It catalyses the reaction L-aspartyl-tRNA(Asn) + L-glutamine + ATP + H2O = L-asparaginyl-tRNA(Asn) + L-glutamate + ADP + phosphate + 2 H(+). Its function is as follows. Allows the formation of correctly charged Asn-tRNA(Asn) or Gln-tRNA(Gln) through the transamidation of misacylated Asp-tRNA(Asn) or Glu-tRNA(Gln) in organisms which lack either or both of asparaginyl-tRNA or glutaminyl-tRNA synthetases. The reaction takes place in the presence of glutamine and ATP through an activated phospho-Asp-tRNA(Asn) or phospho-Glu-tRNA(Gln). The chain is Aspartyl/glutamyl-tRNA(Asn/Gln) amidotransferase subunit B from Listeria monocytogenes serovar 1/2a (strain ATCC BAA-679 / EGD-e).